A 419-amino-acid chain; its full sequence is MSDKFQSIKGFYDILPADTALWQRIEDSARQVLSQYGYRNIRLPIVEPTELFIRGVGEHTDIVEKEMYSWEDKLNGDRLTLRPEGTAGCVRAVVEHSLTYNGPQRLWYMGPMFRHENVQKGRQRQFHQIGAEAFGYTGPDVDAEQISMLARLWRELGVANEVELQLNTIGDASERAQYRQVLIRYFEQHESLLDDDAKRRLYANPLRILDSKNPAMQTMIEAAPKLLDSLGEESRAHFDGVTRQLDQLGIKWTLNTRLVRGLDYYNRTVFEWVTNKLGSQGTIAGGGRYDSLVQSLGGKETPACGFGIGLERVFLLMRECGIEAFHSPDVYLVNVGDAANKAALPIAEALRDSGLSVSLHAGGGSFKSQMKKADQSGAQYALILGDDEIAANEVCLKPLRENGEQRRMSLSQAIEALHT.

The protein belongs to the class-II aminoacyl-tRNA synthetase family. Homodimer.

It localises to the cytoplasm. It carries out the reaction tRNA(His) + L-histidine + ATP = L-histidyl-tRNA(His) + AMP + diphosphate + H(+). The sequence is that of Histidine--tRNA ligase from Methylobacillus flagellatus (strain ATCC 51484 / DSM 6875 / VKM B-1610 / KT).